A 375-amino-acid chain; its full sequence is DNA replication and repair protein RecF (375 aa).

30–37 (GENAQGKT) lines the ATP pocket.

It belongs to the RecF family.

It is found in the cytoplasm. The RecF protein is involved in DNA metabolism; it is required for DNA replication and normal SOS inducibility. RecF binds preferentially to single-stranded, linear DNA. It also seems to bind ATP. The sequence is that of DNA replication and repair protein RecF from Bacillus cereus (strain B4264).